The sequence spans 520 residues: Probable methylmalonate-semialdehyde/malonate-semialdehyde dehydrogenase [acylating], mitochondrial (520 aa).

Ala-169, Phe-171, Lys-195, Glu-198, Arg-199, and Ser-248 together coordinate NAD(+). Cys-303 acts as the Nucleophile in catalysis. Position 403 (Glu-403) interacts with NAD(+).

This sequence belongs to the aldehyde dehydrogenase family. Homotetramer.

The protein resides in the mitochondrion. It catalyses the reaction 2-methyl-3-oxopropanoate + NAD(+) + CoA + H2O = propanoyl-CoA + hydrogencarbonate + NADH + H(+). It carries out the reaction 3-oxopropanoate + NAD(+) + CoA + H2O = hydrogencarbonate + acetyl-CoA + NADH + H(+). Functionally, probable malonate and methylmalonate semialdehyde dehydrogenase involved in the catabolism of valine, thymine, and compounds catabolized by way of beta-alanine, including uracil and cytidine. In Drosophila melanogaster (Fruit fly), this protein is Probable methylmalonate-semialdehyde/malonate-semialdehyde dehydrogenase [acylating], mitochondrial.